The primary structure comprises 414 residues: Protein PHLOEM PROTEIN 2-LIKE A10 (414 aa).

Helical transmembrane passes span 20–40 (WLIF…VYHL) and 379–399 (YVGA…LHII).

The protein localises to the membrane. This Arabidopsis thaliana (Mouse-ear cress) protein is Protein PHLOEM PROTEIN 2-LIKE A10 (PP2A10).